The following is a 165-amino-acid chain: Small ribosomal subunit protein uS5 (165 aa).

The S5 DRBM domain maps to 10-73 (QIEKLISLNR…TSARKNLRFV (64 aa)).

Belongs to the universal ribosomal protein uS5 family. In terms of assembly, part of the 30S ribosomal subunit. Contacts proteins S4 and S8.

Its function is as follows. With S4 and S12 plays an important role in translational accuracy. Functionally, located at the back of the 30S subunit body where it stabilizes the conformation of the head with respect to the body. The sequence is that of Small ribosomal subunit protein uS5 from Borreliella burgdorferi (strain ATCC 35210 / DSM 4680 / CIP 102532 / B31) (Borrelia burgdorferi).